The following is an 815-amino-acid chain: RNA-binding protein 5 (815 aa).

A disordered region spans residues 1–93 (MGSDKRVSRT…EHDYRHDISD (93 aa)). 5 positions are modified to phosphoserine: S18, S59, S69, S72, and S78. The RRM 1 domain occupies 98 to 178 (KTIMLRGLPI…KHIAMHYSNP (81 aa)). A RanBP2-type zinc finger spans residues 181 to 210 (KFEDWLCNKCCLNNFRKRLKCFRCGADKFD). Positions 231-315 (DTIILRNIAP…KTIGVDFAKS (85 aa)) constitute an RRM 2 domain. A required for interaction with U2AF2 region spans residues 321-809 (VLPDGNRVSA…KDAVRKAMFA (489 aa)). 2 disordered regions span residues 407–468 (AVVS…DESS) and 508–540 (AAES…AQQI). Positions 411–422 (QSPQLYNQTSNP) are enriched in polar residues. Residues 426-446 (PTEEAQPSTSTSTQAPAASPT) show a composition bias toward low complexity. Residue S444 is modified to Phosphoserine. The segment at 452-535 (TKYAVPDTST…KEKKEKPKSK (84 aa)) is sufficient for interaction with ACIN1, PRPF8, SFRS3, SNRPB, SNRPN, SNRNP70 and SNRNP200. Polar residues predominate over residues 510 to 519 (ESSSNQQAGL). S621 and S624 each carry phosphoserine. The segment at 647-672 (MACLLCRRQFPNRDALVRHQQLSDLH) adopts a C2H2-type zinc-finger fold. Positions 743 to 789 (HSNIGNKMLQAMGWREGSGLGRKCQGITAPIEAQVRLKGAGLGAKGS) constitute a G-patch domain.

Belongs to the RBM5/RBM10 family. Component of the spliceosome A complex (also known as the prespliceosome). Appears to dissociate from the spliceosome upon formation of the spliceosome B complex (also known as the precatalytic spliceosome), in which the heterotrimeric U4/U6.U5 snRNPs are bound. Interacts with U2AF2; this interaction is direct. Also interacts with ACIN1, PRPF8, SFRS3, SNRPB, SNRPN, SNRNP70 and SNRNP200; these interactions may be indirect.

It localises to the nucleus. Component of the spliceosome A complex. Binds to ssRNA containing the consensus sequence 5'-AGGUAA-3'. Regulates alternative splicing of a number of mRNAs. May modulate splice site pairing after recruitment of the U1 and U2 snRNPs to the 5' and 3' splice sites of the intron. May both positively and negatively regulate apoptosis by regulating the alternative splicing of several genes involved in this process, including FAS and CASP2/caspase-2. In the case of FAS, promotes production of a soluble form of FAS that inhibits apoptosis. In the case of CASP2/caspase-2, promotes production of a catalytically active form of CASP2/Caspase-2 that induces apoptosis. The polypeptide is RNA-binding protein 5 (Rbm5) (Rattus norvegicus (Rat)).